The sequence spans 503 residues: Probable protein kinase UbiB (503 aa).

Residues 13–35 (TFYRYRLAGLCASLMGSGWICAL) form a helical membrane-spanning segment. One can recognise a Protein kinase domain in the interval 120-491 (EFETEPIASA…QQRQSLWLAV (372 aa)). ATP-binding positions include 126 to 134 (IASASIAQV) and Lys148. Asp283 acts as the Proton acceptor in catalysis. A helical membrane pass occupies residues 485-502 (QSLWLAVIAVVLLLILLL).

The protein belongs to the ABC1 family. UbiB subfamily.

Its subcellular location is the cell inner membrane. It functions in the pathway cofactor biosynthesis; ubiquinone biosynthesis [regulation]. Functionally, is probably a protein kinase regulator of UbiI activity which is involved in aerobic coenzyme Q (ubiquinone) biosynthesis. This Neisseria meningitidis serogroup A / serotype 4A (strain DSM 15465 / Z2491) protein is Probable protein kinase UbiB.